We begin with the raw amino-acid sequence, 509 residues long: ATP synthase subunit alpha (509 aa).

Position 169–176 (169–176 (GDRQTGKT)) interacts with ATP.

It belongs to the ATPase alpha/beta chains family. In terms of assembly, F-type ATPases have 2 components, CF(1) - the catalytic core - and CF(0) - the membrane proton channel. CF(1) has five subunits: alpha(3), beta(3), gamma(1), delta(1), epsilon(1). CF(0) has four main subunits: a(1), b(1), b'(1) and c(9-12).

It is found in the cell inner membrane. The enzyme catalyses ATP + H2O + 4 H(+)(in) = ADP + phosphate + 5 H(+)(out). Produces ATP from ADP in the presence of a proton gradient across the membrane. The alpha chain is a regulatory subunit. The chain is ATP synthase subunit alpha from Bradyrhizobium sp. (strain ORS 278).